The following is a 387-amino-acid chain: Signal-regulatory protein gamma (387 aa).

The N-terminal stretch at 1–28 is a signal peptide; sequence MPVPASWPHPPGPFLLLTLLLGLTEVAG. The 109-residue stretch at 29 to 137 folds into the Ig-like V-type domain; it reads EEELQMIQPE…ENVEFKSGPG (109 aa). At 29–360 the chain is on the extracellular side; that stretch reads EEELQMIQPE…QKDQSSDATP (332 aa). 2 disulfide bridges follow: C53–C119 and C168–C226. 2 Ig-like C1-type domains span residues 146–245 and 252–340; these read PSAP…ANLS and PTLE…LAVS. N-linked (GlcNAc...) asparagine glycosylation is found at N243, N268, N309, and N317. An intrachain disulfide couples C271 to C329. Residues 361–383 traverse the membrane as a helical segment; that stretch reads GPASSLTALLLIAVLLGPIYVPW. Over 384 to 387 the chain is Cytoplasmic; the sequence is KQKT.

As to quaternary structure, interacts with CD47. In terms of tissue distribution, detected in liver, and at very low levels in brain, heart, lung, pancreas, kidney, placenta and skeletal muscle. Expressed on CD4+ T-cells, CD8+ T-cells, CD56-bright natural killer (NK) cells, CD20+ cells, and all activated NK cells. Mainly present in the paracortical T-cell area of lymph nodes, with only sparse positive cells in the mantle and in the germinal center of B-cell follicles. In the thymus, primarily expressed in the medulla on mature T-lymphocytes that have undergone thymic selection.

The protein localises to the membrane. Its function is as follows. Probable immunoglobulin-like cell surface receptor. On binding with CD47, mediates cell-cell adhesion. Engagement on T-cells by CD47 on antigen-presenting cells results in enhanced antigen-specific T-cell proliferation and costimulates T-cell activation. The sequence is that of Signal-regulatory protein gamma (SIRPG) from Homo sapiens (Human).